Reading from the N-terminus, the 498-residue chain is Pentatricopeptide repeat-containing protein At3g61360 (498 aa).

PPR repeat units follow at residues 102–132 (TSDSFEKTLHILARMRYFDQAWALMAEVRKD), 138–172 (SFKSMSILLCKIAKFGSYEETLEAFVKMEKEIFRK), 175–205 (GVDEFNILLRAFCTEREMKEARSIFEKLHSR), 209–243 (DVKTMNILLLGFKEAGDVTATELFYHEMVKRGFKP), 244–278 (NSVTYGIRIDGFCKKRNFGEALRLFEDMDRLDFDI), 279–313 (TVQILTTLIHGSGVARNKIKARQLFDEISKRGLTP), 314–348 (DCGAYNALMSSLMKCGDVSGAIKVMKEMEEKGIEP), 349–385 (DSVTFHSMFIGMMKSKEFGFNGVCEYYQKMKERSLVP), and 386–420 (KTPTIVMLMKLFCHNGEVNLGLDLWKYMLEKGYCP).

It belongs to the PPR family. P subfamily.

In Arabidopsis thaliana (Mouse-ear cress), this protein is Pentatricopeptide repeat-containing protein At3g61360.